A 302-amino-acid chain; its full sequence is Pantothenate synthetase (302 aa).

An ATP-binding site is contributed by 47–54 (MGALHEGH). His54 serves as the catalytic Proton donor. Gln79 is a (R)-pantoate binding site. A beta-alanine-binding site is contributed by Gln79. Position 165–168 (165–168 (GEKD)) interacts with ATP. Gln171 is a (R)-pantoate binding site. ATP-binding positions include Val194 and 202–205 (LSSR).

The protein belongs to the pantothenate synthetase family. Homodimer.

It is found in the cytoplasm. It carries out the reaction (R)-pantoate + beta-alanine + ATP = (R)-pantothenate + AMP + diphosphate + H(+). The protein operates within cofactor biosynthesis; (R)-pantothenate biosynthesis; (R)-pantothenate from (R)-pantoate and beta-alanine: step 1/1. Functionally, catalyzes the condensation of pantoate with beta-alanine in an ATP-dependent reaction via a pantoyl-adenylate intermediate. This Saccharopolyspora erythraea (strain ATCC 11635 / DSM 40517 / JCM 4748 / NBRC 13426 / NCIMB 8594 / NRRL 2338) protein is Pantothenate synthetase.